The chain runs to 261 residues: tRNA pseudouridine synthase A (261 aa).

Catalysis depends on D51, which acts as the Nucleophile. Y109 serves as a coordination point for substrate.

The protein belongs to the tRNA pseudouridine synthase TruA family. In terms of assembly, homodimer.

It carries out the reaction uridine(38/39/40) in tRNA = pseudouridine(38/39/40) in tRNA. Its function is as follows. Formation of pseudouridine at positions 38, 39 and 40 in the anticodon stem and loop of transfer RNAs. This chain is tRNA pseudouridine synthase A, found in Methylobacillus flagellatus (strain ATCC 51484 / DSM 6875 / VKM B-1610 / KT).